We begin with the raw amino-acid sequence, 168 residues long: I-Kappa-B like protein G2 (168 aa).

2 ANK repeats span residues 56 to 88 (SQRQCVHIVVCEDKVNAIKKLKVLLEMGADING) and 93 to 123 (GGNTPLHLAVHSNNYKLVKWLCKQPSINKTA).

It belongs to the polydnaviridae I-Kappa-B-like protein family.

In terms of biological role, suppresses the host immune response through NF-kappa-B inactivation. Possesses ankyrin repeat domains required for NF-kappa-B binding but lacks the regulatory regions required for dissociation from NF-kappa-B and degradation. Therefore, prevents host NF-kappa-B release and subsequent activation. In Microplitis demolitor (Parasitoid wasp), this protein is I-Kappa-B like protein G2 (G4).